The following is a 286-amino-acid chain: Glucose import system permease protein GlcT (286 aa).

6 helical membrane passes run 6–26 (TIIL…LVIW), 71–91 (VILV…LYFL), 103–123 (IVIY…LWLF), 154–174 (LVLV…LAGF), 199–219 (ILIP…FLFS), and 260–280 (VATM…LTVI). The 213-residue stretch at 63 to 275 (LLHSIELSVI…LIATIIIIPY (213 aa)) folds into the ABC transmembrane type-1 domain.

It belongs to the binding-protein-dependent transport system permease family. The complex is composed of two ATP-binding proteins (GlcV), two transmembrane proteins (GlcT and GlcU) and a solute-binding protein (GlcS).

It is found in the cell membrane. In terms of biological role, part of the ABC transporter complex GlcSTUV involved in glucose uptake. Responsible for the translocation of the substrate across the membrane. The protein is Glucose import system permease protein GlcT of Saccharolobus solfataricus (strain ATCC 35092 / DSM 1617 / JCM 11322 / P2) (Sulfolobus solfataricus).